Reading from the N-terminus, the 72-residue chain is UPF0352 protein SO_2176 (72 aa).

This sequence belongs to the UPF0352 family.

The sequence is that of UPF0352 protein SO_2176 from Shewanella oneidensis (strain ATCC 700550 / JCM 31522 / CIP 106686 / LMG 19005 / NCIMB 14063 / MR-1).